We begin with the raw amino-acid sequence, 118 residues long: D-dopachrome decarboxylase (118 aa).

Pro2 carries the post-translational modification N-acetylproline. Residue Lys33 is modified to N6-acetyllysine. Ser90 carries the post-translational modification Phosphoserine.

This sequence belongs to the MIF family. As to quaternary structure, homotrimer.

The protein localises to the cytoplasm. It catalyses the reaction D-dopachrome + H(+) = 5,6-dihydroxyindole + CO2. Its function is as follows. Tautomerization of D-dopachrome with decarboxylation to give 5,6-dihydroxyindole (DHI). This chain is D-dopachrome decarboxylase (Ddt), found in Mus musculus (Mouse).